A 393-amino-acid chain; its full sequence is ATP phosphoribosyltransferase regulatory subunit (393 aa).

It belongs to the class-II aminoacyl-tRNA synthetase family. HisZ subfamily. Heteromultimer composed of HisG and HisZ subunits.

The protein resides in the cytoplasm. The protein operates within amino-acid biosynthesis; L-histidine biosynthesis; L-histidine from 5-phospho-alpha-D-ribose 1-diphosphate: step 1/9. In terms of biological role, required for the first step of histidine biosynthesis. May allow the feedback regulation of ATP phosphoribosyltransferase activity by histidine. This is ATP phosphoribosyltransferase regulatory subunit from Synechococcus sp. (strain RCC307).